The following is a 427-amino-acid chain: Trigger factor (427 aa).

Positions 163–248 (GDTVVIDFVG…VNEVKAKELP (86 aa)) constitute a PPIase FKBP-type domain.

It belongs to the FKBP-type PPIase family. Tig subfamily.

It is found in the cytoplasm. It catalyses the reaction [protein]-peptidylproline (omega=180) = [protein]-peptidylproline (omega=0). Functionally, involved in protein export. Acts as a chaperone by maintaining the newly synthesized protein in an open conformation. Functions as a peptidyl-prolyl cis-trans isomerase. This chain is Trigger factor, found in Lactococcus lactis subsp. cremoris (strain MG1363).